The chain runs to 22 residues: thr operon leader peptide (22 aa).

It belongs to the thr operon leader peptide family.

This protein is involved in control of the biosynthesis of threonine. The protein is thr operon leader peptide of Yersinia enterocolitica serotype O:8 / biotype 1B (strain NCTC 13174 / 8081).